The following is a 296-amino-acid chain: GTPase Era (296 aa).

An Era-type G domain is found at 3-170; it reads KSGFITIVGR…LELMVKYLPE (168 aa). Residues 11–18 form a G1 region; the sequence is GRPNVGKS. 11 to 18 contributes to the GTP binding site; the sequence is GRPNVGKS. Residues 37–41 are G2; sequence QTTRN. The interval 58–61 is G3; that stretch reads DTPG. GTP contacts are provided by residues 58–62 and 120–123; these read DTPGI and NKVD. The interval 120-123 is G4; that stretch reads NKVD. Positions 149–151 are G5; it reads ISA. A KH type-2 domain is found at 201-278; sequence LSQEVPHGIA…NIKIWVKVRK (78 aa).

Belongs to the TRAFAC class TrmE-Era-EngA-EngB-Septin-like GTPase superfamily. Era GTPase family. In terms of assembly, monomer.

It is found in the cytoplasm. It localises to the cell membrane. Its function is as follows. An essential GTPase that binds both GDP and GTP, with rapid nucleotide exchange. Plays a role in 16S rRNA processing and 30S ribosomal subunit biogenesis and possibly also in cell cycle regulation and energy metabolism. This chain is GTPase Era, found in Clostridium perfringens (strain ATCC 13124 / DSM 756 / JCM 1290 / NCIMB 6125 / NCTC 8237 / Type A).